Consider the following 125-residue polypeptide: Large ribosomal subunit protein mL51 (125 aa).

Residues 1 to 29 (MWSVQKLLWGCRSLLPQGCRSFSLGNRDL) constitute a mitochondrion transit peptide.

Belongs to the mitochondrion-specific ribosomal protein mL51 family. In terms of assembly, component of the mitochondrial ribosome large subunit (39S) which comprises a 16S rRNA and about 50 distinct proteins.

Its subcellular location is the mitochondrion. This chain is Large ribosomal subunit protein mL51 (mrpl51), found in Xenopus laevis (African clawed frog).